A 246-amino-acid polypeptide reads, in one-letter code: Zinc import ATP-binding protein ZnuC (246 aa).

The ABC transporter domain occupies 24-244 (LKIENLALAY…TLGEIFSSYI (221 aa)). Residue 56–63 (GPNGGGKT) participates in ATP binding.

This sequence belongs to the ABC transporter superfamily. Zinc importer (TC 3.A.1.15.5) family. As to quaternary structure, the complex is composed of two ATP-binding proteins (ZnuC), two transmembrane proteins (ZnuB) and a solute-binding protein (ZnuA).

The protein localises to the cell membrane. The catalysed reaction is Zn(2+)(out) + ATP(in) + H2O(in) = Zn(2+)(in) + ADP(in) + phosphate(in) + H(+)(in). Its function is as follows. Part of the ABC transporter complex ZnuABC involved in zinc import. Responsible for energy coupling to the transport system. This Wolbachia sp. subsp. Brugia malayi (strain TRS) protein is Zinc import ATP-binding protein ZnuC.